A 546-amino-acid polypeptide reads, in one-letter code: Tyrosine-protein kinase yes (546 aa).

Positions Met-1–Pro-18 are enriched in basic and acidic residues. Positions Met-1–Gly-58 are disordered. Gly-2 is lipidated: N-myristoyl glycine. The S-palmitoyl cysteine; in membrane form moiety is linked to residue Cys-3. Over residues Pro-48–Gly-58 the composition is skewed to polar residues. An SH3 domain is found at Gly-94 to Ser-155. In terms of domain architecture, SH2 spans Trp-161–Cys-258. The region spanning Leu-280–Phe-533 is the Protein kinase domain. ATP-binding positions include Leu-286–Val-294 and Lys-308. Residue Asp-399 is the Proton acceptor of the active site. Tyr-429 bears the Phosphotyrosine; by autocatalysis mark. Residue Tyr-540 is modified to Phosphotyrosine; by CSK.

Belongs to the protein kinase superfamily. Tyr protein kinase family. SRC subfamily. In terms of processing, autophosphorylation at Tyr-429 maintains enzyme activity. Post-translationally, palmitoylation at Cys-3 promotes membrane localization. Widely expressed.

It localises to the cell membrane. It is found in the cytoplasm. The protein resides in the cytoskeleton. The protein localises to the microtubule organizing center. Its subcellular location is the centrosome. It localises to the cytosol. It is found in the cell junction. The enzyme catalyses L-tyrosyl-[protein] + ATP = O-phospho-L-tyrosyl-[protein] + ADP + H(+). Non-receptor protein tyrosine kinase that is involved in the regulation of cell growth and survival, apoptosis, cell-cell adhesion, cytoskeleton remodeling, differentiation, G2/M progression and cytokinesis. Required for convergent extension cell movements during gastrulation, acting with fyna via rhoa. May be required for epiboly to occur, possibly through its effects in calcium signaling. During embryonic development, phosphorylates ptk2.1/fak. The chain is Tyrosine-protein kinase yes (yes1) from Danio rerio (Zebrafish).